Reading from the N-terminus, the 262-residue chain is Orotidine 5'-phosphate decarboxylase (262 aa).

Residues Asp-35, 57–59, 89–98, Tyr-215, and Arg-233 contribute to the substrate site; these read KTH and DRKFADIGNT. Catalysis depends on Lys-91, which acts as the Proton donor.

It belongs to the OMP decarboxylase family.

It catalyses the reaction orotidine 5'-phosphate + H(+) = UMP + CO2. The protein operates within pyrimidine metabolism; UMP biosynthesis via de novo pathway; UMP from orotate: step 2/2. The protein is Orotidine 5'-phosphate decarboxylase (URA3) of Pichia kudriavzevii (Yeast).